An 859-amino-acid chain; its full sequence is Sulfate permease 1 (859 aa).

N-linked (GlcNAc...) asparagine glycans are attached at residues Asn51 and Asn93. 8 helical membrane-spanning segments follow: residues 94 to 114 (LTAK…KWFP), 116 to 136 (YNFT…CVLV), 148 to 168 (LSPE…SLFA), 173 to 193 (VCIG…AEVL), 206 to 226 (PIIA…LGIL), 234 to 254 (LISL…IIWG), 292 to 312 (FGLI…TFGI), and 332 to 352 (FYFY…TAIS). N-linked (GlcNAc...) asparagine glycans are attached at residues Asn358 and Asn391. The next 4 helical transmembrane spans lie at 395 to 415 (EIPA…KSFG), 428 to 448 (LIAI…PATG), 468 to 488 (VFTG…FFFI), and 525 to 545 (FIVT…YFAM). Residues Asn630, Asn653, and Asn718 are each glycosylated (N-linked (GlcNAc...) asparagine). An STAS domain is found at 630 to 808 (NTTVRPPPPG…SIIAGHSSFH (179 aa)).

It belongs to the SLC26A/SulP transporter (TC 2.A.53) family.

Its subcellular location is the membrane. High affinity uptake of sulfate into the cell. This Saccharomyces cerevisiae (strain ATCC 204508 / S288c) (Baker's yeast) protein is Sulfate permease 1 (SUL1).